Here is a 150-residue protein sequence, read N- to C-terminus: Large ribosomal subunit protein uL23 (150 aa).

The interval 1–24 is disordered; that stretch reads MNKENKTQAVNKAKNTAKVAKKGS. The span at 7 to 18 shows a compositional bias: low complexity; it reads TQAVNKAKNTAK.

This sequence belongs to the universal ribosomal protein uL23 family.

The polypeptide is Large ribosomal subunit protein uL23 (RPL23A) (Tetrahymena thermophila (strain SB210)).